Here is a 681-residue protein sequence, read N- to C-terminus: Mitosis inhibitor nif1 (681 aa).

A disordered region spans residues 22 to 43; the sequence is LNKKDGNDDDKAEHSKRSGYHG. A compositionally biased stretch (basic and acidic residues) spans 23-37; it reads NKKDGNDDDKAEHSK. At Ser70 the chain carries Phosphoserine. 2 disordered regions span residues 80-104 and 182-324; these read TTSGSSSDLLNIESPASPAEASSPF and YYHE…SSRQ. The span at 92–103 shows a compositional bias: low complexity; that stretch reads ESPASPAEASSP. The span at 191–203 shows a compositional bias: polar residues; sequence TASNTSPTPNSIK. At Ser196 the chain carries Phosphoserine. Residues 238–278 are compositionally biased toward low complexity; the sequence is SSGDSTPLSGSSSSKGMLMSMSTSENHSLSSNPELSNSNLL. Positions 296–306 are enriched in basic and acidic residues; it reads SSKEPDKEHST. Sel1-like repeat units lie at residues 547–582 and 583–618; these read ALILYELGVCFMHGWGITRDRYLALHLIKLSGAWGD and ADAQFEAGLQMSLGAVSDKDSHMAAYYYRLAGFQGI.

Its subcellular location is the cytoplasm. Functions as a negative regulator of mitosis. It interacts with the C-terminal of nim1, thereby inhibiting its kinase activity which phosphorylates wee1. In Schizosaccharomyces pombe (strain 972 / ATCC 24843) (Fission yeast), this protein is Mitosis inhibitor nif1 (nif1).